The sequence spans 1334 residues: Aldehyde oxidase 1 (1334 aa).

A 2Fe-2S ferredoxin-type domain is found at 5–92 (PELLFYVNGR…GAAVTTVEGI (88 aa)). [2Fe-2S] cluster is bound by residues Cys-44, Cys-49, Cys-52, and Cys-74. Gln-113 lines the Mo-molybdopterin pocket. Cys-114, Cys-117, Cys-149, and Cys-151 together coordinate [2Fe-2S] cluster. Residue Cys-151 participates in Mo-molybdopterin binding. In terms of domain architecture, FAD-binding PCMH-type spans 236–421 (FSGERMMWIS…ASVHIPYSRK (186 aa)). FAD is bound by residues 264–271 (VVMGNTSV), Ala-345, Ser-354, His-358, Asp-367, and Leu-411. Residues 802-803 (AF) and Met-1043 contribute to the Mo-molybdopterin site. Phosphoserine is present on Ser-1064. Mo-molybdopterin is bound by residues 1084–1087 (GSVV), Gln-1199, and Leu-1264. The active-site Proton acceptor; for azaheterocycle hydroxylase activity is the Glu-1266.

Belongs to the xanthine dehydrogenase family. As to quaternary structure, homodimer. [2Fe-2S] cluster serves as cofactor. Requires FAD as cofactor. It depends on Mo-molybdopterin as a cofactor. The N-terminus is blocked. In terms of tissue distribution, very high expression in liver and lung. High expression in kidney, pancreas, brain stem and spinal cord. Moderate expression in heart, testis, eye, cerebral cortex and cerebellum. Low expression in stomach and muscle.

It is found in the cytoplasm. It carries out the reaction an aldehyde + O2 + H2O = a carboxylate + H2O2 + H(+). It catalyses the reaction retinal + O2 + H2O = retinoate + H2O2 + H(+). The catalysed reaction is all-trans-retinal + O2 + H2O = all-trans-retinoate + H2O2 + H(+). Inhibited by hydralazine and menadione. Not inhibited by BOF-4272 or allopurinol, xanthine dehydrogenase potent inhibitors. In contrast to guinea pig, human and rat, isovanillin is not an inhibitor but a substrate for AOX1 in rabbit. Its function is as follows. Oxidase with broad substrate specificity, oxidizing aromatic azaheterocycles, such as N1-methylnicotinamide, N-methylphthalazinium and phthalazine, as well as aldehydes, such as benzaldehyde, retinal, pyridoxal, and vanillin. Plays a key role in the metabolism of xenobiotics and drugs containing aromatic azaheterocyclic substituents. Participates in the bioactivation of prodrugs such as famciclovir, catalyzing the oxidation step from 6-deoxypenciclovir to penciclovir, which is a potent antiviral agent. Is probably involved in the regulation of reactive oxygen species homeostasis. May be a prominent source of superoxide generation via the one-electron reduction of molecular oxygen. May also catalyze nitric oxide (NO) production via the reduction of nitrite to NO with NADH or aldehyde as electron donor. May play a role in adipogenesis. Cannot use hypoxanthine and all-trans-retinol as substrate. The chain is Aldehyde oxidase 1 from Oryctolagus cuniculus (Rabbit).